Reading from the N-terminus, the 340-residue chain is Glyceraldehyde-3-phosphate dehydrogenase (340 aa).

NAD(+) is bound by residues 11–12 (SI) and G111. 140-142 (SCN) is a D-glyceraldehyde 3-phosphate binding site. The active-site Nucleophile is the C141. R169 provides a ligand contact to NAD(+). 195–196 (HG) lines the D-glyceraldehyde 3-phosphate pocket. Q303 contributes to the NAD(+) binding site.

Belongs to the glyceraldehyde-3-phosphate dehydrogenase family. As to quaternary structure, homotetramer.

It is found in the cytoplasm. The enzyme catalyses D-glyceraldehyde 3-phosphate + phosphate + NADP(+) = (2R)-3-phospho-glyceroyl phosphate + NADPH + H(+). It carries out the reaction D-glyceraldehyde 3-phosphate + phosphate + NAD(+) = (2R)-3-phospho-glyceroyl phosphate + NADH + H(+). It participates in carbohydrate degradation; glycolysis; pyruvate from D-glyceraldehyde 3-phosphate: step 1/5. The chain is Glyceraldehyde-3-phosphate dehydrogenase from Methanococcus vannielii (strain ATCC 35089 / DSM 1224 / JCM 13029 / OCM 148 / SB).